The primary structure comprises 77 residues: Acyl carrier protein (77 aa).

A Carrier domain is found at 2-77; the sequence is SEKLQKIQAL…DAVAYIEERS (76 aa). O-(pantetheine 4'-phosphoryl)serine is present on Ser-37.

This sequence belongs to the acyl carrier protein (ACP) family. Post-translationally, 4'-phosphopantetheine is transferred from CoA to a specific serine of apo-ACP by AcpS. This modification is essential for activity because fatty acids are bound in thioester linkage to the sulfhydryl of the prosthetic group.

It is found in the cytoplasm. It participates in lipid metabolism; fatty acid biosynthesis. Its function is as follows. Carrier of the growing fatty acid chain in fatty acid biosynthesis. This chain is Acyl carrier protein, found in Desulforudis audaxviator (strain MP104C).